We begin with the raw amino-acid sequence, 631 residues long: Leucine aminopeptidase 2-2 (631 aa).

Substrate contacts are provided by residues glutamine 140 to glutamine 142 and proline 265 to glutamate 270. Residue histidine 294 coordinates Zn(2+). Residue glutamate 295 is the Proton acceptor of the active site. Positions 298 and 317 each coordinate Zn(2+). Catalysis depends on tyrosine 395, which acts as the Proton donor.

This sequence belongs to the peptidase M1 family. Zn(2+) serves as cofactor.

It localises to the cytoplasm. The protein localises to the nucleus. The enzyme catalyses an epoxide + H2O = an ethanediol. Its function is as follows. Aminopeptidase that preferentially cleaves di- and tripeptides. Also has low epoxide hydrolase activity (in vitro). Can hydrolyze the epoxide leukotriene LTA(4) but it forms preferentially 5,6-dihydroxy-7,9,11,14-eicosatetraenoic acid rather than the cytokine leukotriene B(4) as the product compared to the homologous mammalian enzyme (in vitro). This is Leucine aminopeptidase 2-2 from Meyerozyma guilliermondii (strain ATCC 6260 / CBS 566 / DSM 6381 / JCM 1539 / NBRC 10279 / NRRL Y-324) (Yeast).